We begin with the raw amino-acid sequence, 1375 residues long: Mediator of RNA polymerase II transcription subunit 13 (1375 aa).

The disordered stretch occupies residues 1–51 (MKASEMARPPMRPGNPHAFASPATTPSRTASPNNAQGANVRTTQGGNQAGA). Residues 22–51 (PATTPSRTASPNNAQGANVRTTQGGNQAGA) are compositionally biased toward polar residues. 2 coiled-coil regions span residues 182–216 (ADDS…WLSR) and 297–324 (QLER…KDEA). Basic and acidic residues predominate over residues 313–324 (AEEDAMRRKDEA). Disordered stretches follow at residues 313–333 (AEED…SSPF), 350–370 (YPTP…DTPS), 397–417 (YTTT…APLE), 537–581 (ATSP…PASL), 660–689 (RAVS…VDTH), 841–862 (QAKG…IPSN), and 1233–1285 (TPTT…AADP). Positions 397–411 (YTTTDNQQHASTSPT) are enriched in polar residues. Over residues 666–685 (SASDSESETSDMSEGSPEDP) the composition is skewed to acidic residues. Polar residues predominate over residues 1233–1259 (TPTTPAPSNSSAQANTNTPGSTPQTGV).

Belongs to the Mediator complex subunit 13 family. As to quaternary structure, component of the SRB8-11 complex, which itself associates with the Mediator complex.

It is found in the nucleus. Functionally, component of the SRB8-11 complex. The SRB8-11 complex is a regulatory module of the Mediator complex which is itself involved in regulation of basal and activated RNA polymerase II-dependent transcription. The SRB8-11 complex may be involved in the transcriptional repression of a subset of genes regulated by Mediator. It may inhibit the association of the Mediator complex with RNA polymerase II to form the holoenzyme complex. The polypeptide is Mediator of RNA polymerase II transcription subunit 13 (SSN2) (Phaeosphaeria nodorum (strain SN15 / ATCC MYA-4574 / FGSC 10173) (Glume blotch fungus)).